A 420-amino-acid chain; its full sequence is Tyrosine--tRNA ligase (420 aa).

L-tyrosine is bound at residue Y36. The short motif at 41-50 (PTADSLHIGH) is the 'HIGH' region element. Positions 170 and 174 each coordinate L-tyrosine. The 'KMSKS' region motif lies at 231-235 (KFGKS). K234 is a binding site for ATP. Positions 353 to 420 (TNIVEVLIET…KKKYFMVNYQ (68 aa)) constitute an S4 RNA-binding domain.

Belongs to the class-I aminoacyl-tRNA synthetase family. TyrS type 1 subfamily. In terms of assembly, homodimer.

The protein localises to the cytoplasm. The enzyme catalyses tRNA(Tyr) + L-tyrosine + ATP = L-tyrosyl-tRNA(Tyr) + AMP + diphosphate + H(+). Catalyzes the attachment of tyrosine to tRNA(Tyr) in a two-step reaction: tyrosine is first activated by ATP to form Tyr-AMP and then transferred to the acceptor end of tRNA(Tyr). The chain is Tyrosine--tRNA ligase from Staphylococcus aureus (strain bovine RF122 / ET3-1).